A 200-amino-acid chain; its full sequence is NADH-quinone oxidoreductase subunit C (200 aa).

Belongs to the complex I 30 kDa subunit family. As to quaternary structure, NDH-1 is composed of 14 different subunits. Subunits NuoB, C, D, E, F, and G constitute the peripheral sector of the complex.

It localises to the cell inner membrane. The enzyme catalyses a quinone + NADH + 5 H(+)(in) = a quinol + NAD(+) + 4 H(+)(out). Its function is as follows. NDH-1 shuttles electrons from NADH, via FMN and iron-sulfur (Fe-S) centers, to quinones in the respiratory chain. The immediate electron acceptor for the enzyme in this species is believed to be ubiquinone. Couples the redox reaction to proton translocation (for every two electrons transferred, four hydrogen ions are translocated across the cytoplasmic membrane), and thus conserves the redox energy in a proton gradient. The protein is NADH-quinone oxidoreductase subunit C of Burkholderia mallei (strain NCTC 10247).